The chain runs to 54 residues: Large ribosomal subunit protein bL33 (54 aa).

The protein belongs to the bacterial ribosomal protein bL33 family.

The chain is Large ribosomal subunit protein bL33 from Frankia alni (strain DSM 45986 / CECT 9034 / ACN14a).